The primary structure comprises 97 residues: Ferredoxin-thioredoxin reductase, variable chain (97 aa).

The protein belongs to the ferredoxin thioredoxin reductase alpha subunit family. As to quaternary structure, heterodimer of subunit A (variable subunit) and subunit B (catalytic subunit). Heterodimeric FTR forms a complex with ferredoxin and thioredoxin.

The protein localises to the plastid. The protein resides in the chloroplast. Its function is as follows. Variable subunit of the ferredoxin-thioredoxin reductase (FTR), which catalyzes the two-electron reduction of thioredoxins by the electrons provided by reduced ferredoxin. The protein is Ferredoxin-thioredoxin reductase, variable chain of Zea mays (Maize).